The sequence spans 335 residues: Holliday junction branch migration complex subunit RuvB (335 aa).

Residues 1–181 (MDRIVEIEKY…FGMQFRLEFY (181 aa)) are large ATPase domain (RuvB-L). ATP contacts are provided by residues leucine 20, arginine 21, glycine 62, lysine 65, threonine 66, threonine 67, 128-130 (EDY), arginine 171, tyrosine 181, and arginine 218. Mg(2+) is bound at residue threonine 66. The small ATPAse domain (RuvB-S) stretch occupies residues 182-252 (KDSELALILQ…RANEALNSLG (71 aa)). Positions 255–335 (ELGFDAMDLR…LNYEKTLFEE (81 aa)) are head domain (RuvB-H). The DNA site is built by arginine 309 and arginine 314.

It belongs to the RuvB family. As to quaternary structure, homohexamer. Forms an RuvA(8)-RuvB(12)-Holliday junction (HJ) complex. HJ DNA is sandwiched between 2 RuvA tetramers; dsDNA enters through RuvA and exits via RuvB. An RuvB hexamer assembles on each DNA strand where it exits the tetramer. Each RuvB hexamer is contacted by two RuvA subunits (via domain III) on 2 adjacent RuvB subunits; this complex drives branch migration. In the full resolvosome a probable DNA-RuvA(4)-RuvB(12)-RuvC(2) complex forms which resolves the HJ.

The protein localises to the cytoplasm. It carries out the reaction ATP + H2O = ADP + phosphate + H(+). Its function is as follows. The RuvA-RuvB-RuvC complex processes Holliday junction (HJ) DNA during genetic recombination and DNA repair, while the RuvA-RuvB complex plays an important role in the rescue of blocked DNA replication forks via replication fork reversal (RFR). RuvA specifically binds to HJ cruciform DNA, conferring on it an open structure. The RuvB hexamer acts as an ATP-dependent pump, pulling dsDNA into and through the RuvAB complex. RuvB forms 2 homohexamers on either side of HJ DNA bound by 1 or 2 RuvA tetramers; 4 subunits per hexamer contact DNA at a time. Coordinated motions by a converter formed by DNA-disengaged RuvB subunits stimulates ATP hydrolysis and nucleotide exchange. Immobilization of the converter enables RuvB to convert the ATP-contained energy into a lever motion, pulling 2 nucleotides of DNA out of the RuvA tetramer per ATP hydrolyzed, thus driving DNA branch migration. The RuvB motors rotate together with the DNA substrate, which together with the progressing nucleotide cycle form the mechanistic basis for DNA recombination by continuous HJ branch migration. Branch migration allows RuvC to scan DNA until it finds its consensus sequence, where it cleaves and resolves cruciform DNA. This chain is Holliday junction branch migration complex subunit RuvB, found in Campylobacter jejuni subsp. doylei (strain ATCC BAA-1458 / RM4099 / 269.97).